The chain runs to 340 residues: Biotin synthase (340 aa).

The Radical SAM core domain occupies 53–280 (SAIQLSSLLS…LARVRLSAGR (228 aa)). [4Fe-4S] cluster contacts are provided by Cys-68, Cys-72, and Cys-75. 4 residues coordinate [2Fe-2S] cluster: Cys-112, Cys-143, Cys-203, and Arg-275.

Belongs to the radical SAM superfamily. Biotin synthase family. As to quaternary structure, homodimer. [4Fe-4S] cluster is required as a cofactor. Requires [2Fe-2S] cluster as cofactor.

It catalyses the reaction (4R,5S)-dethiobiotin + (sulfur carrier)-SH + 2 reduced [2Fe-2S]-[ferredoxin] + 2 S-adenosyl-L-methionine = (sulfur carrier)-H + biotin + 2 5'-deoxyadenosine + 2 L-methionine + 2 oxidized [2Fe-2S]-[ferredoxin]. It functions in the pathway cofactor biosynthesis; biotin biosynthesis; biotin from 7,8-diaminononanoate: step 2/2. Functionally, catalyzes the conversion of dethiobiotin (DTB) to biotin by the insertion of a sulfur atom into dethiobiotin via a radical-based mechanism. This is Biotin synthase from Bordetella petrii (strain ATCC BAA-461 / DSM 12804 / CCUG 43448).